Here is a 271-residue protein sequence, read N- to C-terminus: Phosphate import ATP-binding protein PstB (271 aa).

The 242-residue stretch at 25–266 (FDTKNLNLWY…PSDKRTEDYI (242 aa)) folds into the ABC transporter domain. 57–64 (GPSGCGKS) is an ATP binding site.

Belongs to the ABC transporter superfamily. Phosphate importer (TC 3.A.1.7) family. As to quaternary structure, the complex is composed of two ATP-binding proteins (PstB), two transmembrane proteins (PstC and PstA) and a solute-binding protein (PstS).

The protein resides in the cell membrane. The catalysed reaction is phosphate(out) + ATP + H2O = ADP + 2 phosphate(in) + H(+). In terms of biological role, part of the ABC transporter complex PstSACB involved in phosphate import. Responsible for energy coupling to the transport system. This is Phosphate import ATP-binding protein PstB from Bacillus anthracis.